The following is a 123-amino-acid chain: Large ribosomal subunit protein bL12 (123 aa).

It belongs to the bacterial ribosomal protein bL12 family. As to quaternary structure, homodimer. Part of the ribosomal stalk of the 50S ribosomal subunit. Forms a multimeric L10(L12)X complex, where L10 forms an elongated spine to which 2 to 4 L12 dimers bind in a sequential fashion. Binds GTP-bound translation factors.

Functionally, forms part of the ribosomal stalk which helps the ribosome interact with GTP-bound translation factors. Is thus essential for accurate translation. In Bartonella quintana (strain Toulouse) (Rochalimaea quintana), this protein is Large ribosomal subunit protein bL12.